The chain runs to 379 residues: Anhydro-N-acetylmuramic acid kinase (379 aa).

Residue 9 to 16 (GTSVDGID) participates in ATP binding.

The protein belongs to the anhydro-N-acetylmuramic acid kinase family.

The enzyme catalyses 1,6-anhydro-N-acetyl-beta-muramate + ATP + H2O = N-acetyl-D-muramate 6-phosphate + ADP + H(+). Its pathway is amino-sugar metabolism; 1,6-anhydro-N-acetylmuramate degradation. The protein operates within cell wall biogenesis; peptidoglycan recycling. Its function is as follows. Catalyzes the specific phosphorylation of 1,6-anhydro-N-acetylmuramic acid (anhMurNAc) with the simultaneous cleavage of the 1,6-anhydro ring, generating MurNAc-6-P. Is required for the utilization of anhMurNAc either imported from the medium or derived from its own cell wall murein, and thus plays a role in cell wall recycling. The sequence is that of Anhydro-N-acetylmuramic acid kinase from Acaryochloris marina (strain MBIC 11017).